The primary structure comprises 582 residues: Urocanate reductase (582 aa).

The N-terminal stretch at 1-20 (MHYKKSIIGIAVTATAIIAG) is a signal peptide. Residue cysteine 21 is the site of N-palmitoyl cysteine attachment. A lipid anchor (S-diacylglycerol cysteine) is attached at cysteine 21. Threonine 93 is modified (FMN phosphoryl threonine). FAD is bound by residues alanine 143, glutamate 162, asparagine 170, serine 171, glycine 175, alanine 176, alanine 285, and aspartate 352. Residue arginine 411 is the Proton donor of the active site. Histidine 521, glutamate 550, and alanine 565 together coordinate FAD.

This sequence belongs to the FAD-dependent oxidoreductase 2 family. FRD/SDH subfamily. FAD serves as cofactor. Requires FMN as cofactor.

It localises to the cell membrane. It catalyses the reaction dihydrourocanate + A = urocanate + AH2. In terms of biological role, catalyzes the two-electron reduction of urocanate to dihydrourocanate (also named imidazole propionate or deamino-histidine). The physiological electron donor is unknown; it might be the membrane-bound tetraheme cytochrome c (CymA). Enables anaerobic growth with urocanate as a sole terminal electron acceptor, and thus can provide the cells with a niche where no other bacteria can compete and survive. Is unable to reduce cinnamate and other unsaturated organic acids such as acrylic, crotonic, fumaric and orotic acids. Has no fumarate reductase or succinate dehydrogenase activity. The sequence is that of Urocanate reductase (urdA) from Shewanella oneidensis (strain ATCC 700550 / JCM 31522 / CIP 106686 / LMG 19005 / NCIMB 14063 / MR-1).